The chain runs to 537 residues: Glutamyl-tRNA reductase, chloroplastic (537 aa).

The N-terminal 48 residues, 1–48, are a transit peptide targeting the chloroplast; the sequence is MMASTTSATAAGGAFAAAKTRAGSSAAGGGACARVAAGGRRRSGVVVR. Residues 134 to 137, Ser194, 199 to 201, and Gln205 contribute to the substrate site; these read TCNR and EGQ. Catalysis depends on Cys135, which acts as the Nucleophile. 276 to 281 is an NADP(+) binding site; that stretch reads GAGKMG.

It belongs to the glutamyl-tRNA reductase family.

The protein localises to the plastid. Its subcellular location is the chloroplast. The catalysed reaction is (S)-4-amino-5-oxopentanoate + tRNA(Glu) + NADP(+) = L-glutamyl-tRNA(Glu) + NADPH + H(+). It participates in porphyrin-containing compound metabolism; protoporphyrin-IX biosynthesis; 5-aminolevulinate from L-glutamyl-tRNA(Glu): step 1/2. Catalyzes the NADPH-dependent reduction of glutamyl-tRNA(Glu) to glutamate 1-semialdehyde (GSA). This chain is Glutamyl-tRNA reductase, chloroplastic, found in Oryza sativa subsp. japonica (Rice).